The sequence spans 249 residues: Cysteine-rich secretory protein 1 (249 aa).

A signal peptide spans 1-20 (MEIKHLLFLVAAACLLPVLS). One can recognise an SCP domain in the interval 45–175 (VNIHNTLRRG…SPRYFYVCHY (131 aa)). A glycan (N-linked (GlcNAc...) asparagine) is linked at N104. 5 disulfide bridges follow: C195/C202, C198/C207, C211/C244, C220/C238, and C229/C242. In terms of domain architecture, ShKT spans 211-244 (CIYYDEYTDCSLEVRFLGCNHSTPRMFCKATCLC). N230 is a glycosylation site (N-linked (GlcNAc...) asparagine).

The protein belongs to the CRISP family. As to expression, expressed in all the regions of the epididymis except the caput and is not detected in the testis, prostate, seminal vesicle, and brain.

In terms of biological role, may have a role in sperm-egg fusion and maturation. This chain is Cysteine-rich secretory protein 1 (CRISP1), found in Macaca mulatta (Rhesus macaque).